The chain runs to 1000 residues: MEELIKAPNSNFIIMSNQPYQTTSPEIVEDYIIKRGQPFVLTGTTQGWSRSNMFTLDFLSERYSEMELINSPRNNETHTDLQGWRMKDFISYLQVSPEERNPKHLYGKDIACPREWQEYLSHKLQPQYSYKSRFDLVSHLPDYLQPETLLVYIGSNGTYTPGHIDMCGSLSQNLMVSSDQDAFAWWFIVPTEYKDEALKFWGDKGGDVYNESRFIRPIDLLGAPFPIYVFKQRPGDFIFVPPDSVHQVVNCGPGISTKVAWNSISLKSLPISYFSSLPHTRRMAKPELFRIKAIAYYTLRKIMGDVENTNFNTIDVNDVIDIIAPLLEIFHNILQTESILIPKPNYPYCNGETIPFLQPFKYFNGDRIQDRRCDHCNSDIFNRCYHCETCKTDDGQGKDFCFDCVSSGIGCEFHFKVMVLKEFISHSKLKKELSSFYEIYKNLLAHSGRRPKEVDDIITKSTDRVSDECGFLTTATVAYHVVFYSSQKKIKCHRCEKRFKKFSIIFCTNCNARFCEQCVVNTFGQNFQVLMKRNEWECFCCKGLCDCSNCTSNSNSSNHPRILNNNQQLGLPYNNNNNSNNNNNNNINNNNNNNNNNINNNNNNMNNNNSINNNNNNNNNNNINNNNINNNNHHNNNGNNNLNSSYSSLNALSSLSQQQSYGSYDNYNNNNNNNNYNNNNNNNGHIQILKSGRQYDDEQSSSSGSGSSNSTPTKPRPRNGGDDGLMSHFSGNNNNNNNHHNNNNNNNNNHHMMSHHHHNNNNNNNNNNNPTTSSLSSLSTSLSSSSTSTQKPMDVHSKKRPIVLDNDKPKGRPPKNLKEWTSTHKFIISLIELFRSSNNAILGKPNPHYKPIENLPPLVQLYLSQRKAFGGVLWAKTNSCPLLPCIWVKDLSVIPPNTKLLPSLIQGKKIVVLFFGDQDQEEYVGIVGKKSIFSFDEVNQTLLLKCGEVPLAQLEDLFNTTEPEIAMKKDIAAFNYKNQIEEKEEGLYVKQELYNNKKII.

A JmjC domain is found at 113–280; that stretch reads PREWQEYLSH…ISYFSSLPHT (168 aa). A PHD-type; atypical zinc finger spans residues 489–544; it reads KIKCHRCEKRFKKFSIIFCTNCNARFCEQCVVNTFGQNFQVLMKRNEWECFCCKGL. The RING-type; degenerate zinc finger occupies 492–542; sequence CHRCEKRFKKFSIIFCTNCNARFCEQCVVNTFGQNFQVLMKRNEWECFCCK. Disordered regions lie at residues 561-647 and 660-818; these read RILN…SSYS and SYGS…KNLK. Composition is skewed to low complexity over residues 574 to 647, 660 to 683, 700 to 710, 732 to 751, and 760 to 789; these read NNNN…SSYS, SYGS…NNNN, SSSSGSGSSNS, NNNN…NNHH, and NNNN…STST. Over residues 805 to 818 the composition is skewed to basic and acidic residues; sequence DNDKPKGRPPKNLK. The a.T hook DNA-binding region spans 810-818; the sequence is KGRPPKNLK.

Monomer.

The protein resides in the nucleus. Its function is as follows. Transcriptional regulator involved in phagocytosis and pinocytosis. Both activates and represses transcription. Regulates expression of acaA, carA, pkaC, csaA, cotB and lagC. Promotes amplification of the tRNA gene-associated retrotransposon TRE5-A, a mobile genetic element formerly called as Dictyostelium repetitive element (DRE). Suppresses agnC and agnE encoding argonaute proteins which are part of a RNA interference pathway controlling TRE5-A amplification. Required for amplification of both sense and antisense RNA transcripts, but does not activate their promoters found in A-module and C-module of the TRE5-A, respectively. Nevertheless, binds to distinct DNA sequences containing A and T stretches within the C-module in vitro. The protein is C-module-binding factor A of Dictyostelium discoideum (Social amoeba).